We begin with the raw amino-acid sequence, 262 residues long: Spindlin-1 (262 aa).

Residues 1–51 (MKTPFGKTPGQRSRADAGHAGVSANMMKKRTSHKKHRSSVGPSKPVSQPRR) form a disordered region. Glycyl lysine isopeptide (Lys-Gly) (interchain with G-Cter in SUMO2) cross-links involve residues Lys7 and Lys28. The span at 27 to 38 (MKKRTSHKKHRS) shows a compositional bias: basic residues. An N6-acetyllysine; alternate modification is found at Lys44. A Glycyl lysine isopeptide (Lys-Gly) (interchain with G-Cter in SUMO2); alternate cross-link involves residue Lys44. The segment at 53 to 116 (IVGCRIQHGW…RVSALEVLPD (64 aa)) is tudor-like domain 1. Residues 93–98 (GFDCVY) are histone H3K4me3 and H3R8me2a binding. 2 positions are modified to phosphoserine; by AURKA: Ser109 and Ser124. Positions 132–193 (MIGKAVEHMF…DYKEGDLRIM (62 aa)) are tudor-like domain 2. A region of interest (histone H3K4me3 and H3R8me2a binding) is located at residue Glu142. Ser199 carries the phosphoserine modification. The segment at 213–262 (LVGKQVEYAKEDGSKRTGMVIHQVEAKPSVYFIKFDDDFHIYVYDLVKTS) is tudor-like domain 3. The interval 250–252 (DFH) is histone H3K4me3 and H3R8me2a binding.

Belongs to the SPIN/STSY family. As to quaternary structure, homodimer; may form higher-order oligomers. Interacts with TCF7L2/TCF4; the interaction is direct. Interacts with HABP4 and SERBP1. Interacts with SPINDOC; SPINDOC stabilizes SPIN1 and enhances its association with bivalent H3K4me3K9me3 mark. Interacts with SPOCD1; promoting recruitment of PIWIL4 and SPOCD1 to transposons. Post-translationally, phosphorylated during oocyte meiotic maturation. Highly expressed in ovarian cancer tissues.

Its subcellular location is the nucleus. It is found in the nucleolus. Chromatin reader that specifically recognizes and binds histone H3 both trimethylated at 'Lys-4' and 'Lys-9' (H3K4me3K9me3) and is involved in piRNA-mediated retrotransposon silencing during spermatogenesis. Plays a key role in the initiation of the PIWIL4-piRNA pathway, a pathway that directs transposon DNA methylation and silencing in the male embryonic germ cells, by promoting recruitment of DNA methylation machinery to transposons: binds young, but not old, LINE1 transposons, which are specifically marked with H3K4me3K9me3, and promotes the recruitment of PIWIL4 and SPOCD1 to transposons, leading to piRNA-directed DNA methylation. Also recognizes and binds histone H3 both trimethylated at 'Lys-4' and asymmetrically dimethylated at 'Arg-8' (H3K4me3 and H3R8me2a) and acts as an activator of Wnt signaling pathway downstream of PRMT2. In case of cancer, promotes cell cancer proliferation via activation of the Wnt signaling pathway. Overexpression induces metaphase arrest and chromosomal instability. Localizes to active rDNA loci and promotes the expression of rRNA genes. May play a role in cell-cycle regulation during the transition from gamete to embryo. Involved in oocyte meiotic resumption, a process that takes place before ovulation to resume meiosis of oocytes blocked in prophase I: may act by regulating maternal transcripts to control meiotic resumption. In Homo sapiens (Human), this protein is Spindlin-1.